The chain runs to 596 residues: UvrABC system protein C (596 aa).

One can recognise a GIY-YIG domain in the interval 14 to 91 (DQPGCYLMKD…IKLHDPKYNV (78 aa)). The 36-residue stretch at 196–231 (EAVKKELEVKMLAAAENLEFERAKEFRDQIAHIDTV) folds into the UVR domain.

It belongs to the UvrC family. Interacts with UvrB in an incision complex.

The protein localises to the cytoplasm. Its function is as follows. The UvrABC repair system catalyzes the recognition and processing of DNA lesions. UvrC both incises the 5' and 3' sides of the lesion. The N-terminal half is responsible for the 3' incision and the C-terminal half is responsible for the 5' incision. In Lysinibacillus sphaericus (strain C3-41), this protein is UvrABC system protein C.